Reading from the N-terminus, the 80-residue chain is Phosphoribosylformylglycinamidine synthase subunit PurS (80 aa).

The protein belongs to the PurS family. Homodimer. Part of the FGAM synthase complex composed of 1 PurL, 1 PurQ and 2 PurS subunits.

It localises to the cytoplasm. The catalysed reaction is N(2)-formyl-N(1)-(5-phospho-beta-D-ribosyl)glycinamide + L-glutamine + ATP + H2O = 2-formamido-N(1)-(5-O-phospho-beta-D-ribosyl)acetamidine + L-glutamate + ADP + phosphate + H(+). Its pathway is purine metabolism; IMP biosynthesis via de novo pathway; 5-amino-1-(5-phospho-D-ribosyl)imidazole from N(2)-formyl-N(1)-(5-phospho-D-ribosyl)glycinamide: step 1/2. Part of the phosphoribosylformylglycinamidine synthase complex involved in the purines biosynthetic pathway. Catalyzes the ATP-dependent conversion of formylglycinamide ribonucleotide (FGAR) and glutamine to yield formylglycinamidine ribonucleotide (FGAM) and glutamate. The FGAM synthase complex is composed of three subunits. PurQ produces an ammonia molecule by converting glutamine to glutamate. PurL transfers the ammonia molecule to FGAR to form FGAM in an ATP-dependent manner. PurS interacts with PurQ and PurL and is thought to assist in the transfer of the ammonia molecule from PurQ to PurL. In Archaeoglobus fulgidus (strain ATCC 49558 / DSM 4304 / JCM 9628 / NBRC 100126 / VC-16), this protein is Phosphoribosylformylglycinamidine synthase subunit PurS.